Here is a 400-residue protein sequence, read N- to C-terminus: Leukosialin (400 aa).

The N-terminal stretch at methionine 1–glycine 19 is a signal peptide. The Extracellular portion of the chain corresponds to serine 20–arginine 253. Threonine 21, threonine 22, threonine 26, and threonine 28 each carry an O-linked (GalNAc...) threonine glycan. 2 stretches are compositionally biased toward polar residues: residues threonine 21 to serine 51 and threonine 58 to alanine 112. Residues threonine 21–serine 224 are disordered. Serine 29 and serine 35 each carry an O-linked (GalNAc...) serine glycan. A glycan (O-linked (GalNAc...) threonine) is linked at threonine 36. O-linked (GalNAc...) serine glycans are attached at residues serine 37, serine 41, and serine 42. O-linked (GalNAc...) threonine glycans are attached at residues threonine 46 and threonine 47. An O-linked (GalNAc...) serine glycan is attached at serine 48. Threonine 50, threonine 58, and threonine 69 each carry an O-linked (GalNAc...) threonine glycan. 2 O-linked (GalNAc...) serine glycosylation sites follow: serine 99 and serine 103. O-linked (GalNAc...) threonine glycans are attached at residues threonine 109 and threonine 113. Serine 114 carries O-linked (GalNAc...) serine glycosylation. Composition is skewed to polar residues over residues threonine 121–threonine 164 and alanine 172–threonine 182. O-linked (GalNAc...) threonine glycosylation is found at threonine 136, threonine 137, threonine 173, and threonine 178. Residues threonine 196 to serine 211 show a composition bias toward low complexity. Residues leucine 212–serine 224 are compositionally biased toward polar residues. Asparagine 239 carries N-linked (GlcNAc...) asparagine glycosylation. A helical transmembrane segment spans residues glycine 254–leucine 276. The Cytoplasmic portion of the chain corresponds to tryptophan 277–proline 400. Positions arginine 278 to glutamine 308 are required for interaction with EZR, MSN and RDX and for co-localization to microvilli. The Nuclear localization signal motif lies at lysine 282 to arginine 296. Residue serine 291 is modified to Phosphoserine. Gly residues predominate over residues glycine 320 to aspartate 332. Residues glycine 320–proline 400 are disordered. Residue serine 336 is modified to Phosphoserine. Residue threonine 341 is modified to Phosphothreonine. Serine 351 bears the Phosphoserine mark. Serine 355 is subject to Phosphoserine; by PKC/PRKCQ. Serine 368 and serine 379 each carry phosphoserine.

As to quaternary structure, interacts with SIGLEC1. In terms of assembly, monomer. Interacts with CTNNB1. Interacts with RDX (via FERM domain), EZR and MSN. Post-translationally, glycosylated; has a high content of sialic acid and O-linked carbohydrate structures. In terms of processing, phosphorylation at Ser-355 is regulated by chemokines, requires its association with ERM proteins (EZR, RDX and MSN) and is essential for its function in the regulation of T-cell trafficking to lymph nodes. Has a high content of sialic acid and O-linked carbohydrate structures. Post-translationally, cleavage by CTSG releases its extracellular domain and triggers its intramembrane proteolysis by gamma-secretase releasing the CD43 cytoplasmic tail chain (CD43-ct) which translocates to the nucleus. In terms of processing, sumoylated. Cell surface of thymocytes, T-lymphocytes, neutrophils, plasma cells and myelomas.

The protein resides in the membrane. The protein localises to the cell projection. It is found in the microvillus. It localises to the uropodium. Its subcellular location is the nucleus. The protein resides in the PML body. Functionally, predominant cell surface sialoprotein of leukocytes which regulates multiple T-cell functions, including T-cell activation, proliferation, differentiation, trafficking and migration. Positively regulates T-cell trafficking to lymph-nodes via its association with ERM proteins (EZR, RDX and MSN). Negatively regulates Th2 cell differentiation and predisposes the differentiation of T-cells towards a Th1 lineage commitment. Promotes the expression of IFN-gamma by T-cells during T-cell receptor (TCR) activation of naive cells and induces the expression of IFN-gamma by CD4(+) T-cells and to a lesser extent by CD8(+) T-cells. Plays a role in preparing T-cells for cytokine sensing and differentiation into effector cells by inducing the expression of cytokine receptors IFNGR and IL4R, promoting IFNGR and IL4R signaling and by mediating the clustering of IFNGR with TCR. Acts as a major E-selectin ligand responsible for Th17 cell rolling on activated vasculature and recruitment during inflammation. Mediates Th17 cells, but not Th1 cells, adhesion to E-selectin. Acts as a T-cell counter-receptor for SIGLEC1. Protects cells from apoptotic signals, promoting cell survival. In Homo sapiens (Human), this protein is Leukosialin (SPN).